Consider the following 338-residue polypeptide: Glycerol-3-phosphate dehydrogenase [NAD(P)+] (338 aa).

Residues Ser-13, Trp-14, and Lys-108 each coordinate NADPH. Sn-glycerol 3-phosphate-binding residues include Lys-108, Gly-139, and Ser-141. Ala-143 lines the NADPH pocket. Lys-194, Asp-247, Ser-257, Arg-258, and Asn-259 together coordinate sn-glycerol 3-phosphate. Catalysis depends on Lys-194, which acts as the Proton acceptor. NADPH is bound at residue Arg-258. NADPH contacts are provided by Val-282 and Glu-284.

The protein belongs to the NAD-dependent glycerol-3-phosphate dehydrogenase family.

The protein localises to the cytoplasm. The enzyme catalyses sn-glycerol 3-phosphate + NAD(+) = dihydroxyacetone phosphate + NADH + H(+). It carries out the reaction sn-glycerol 3-phosphate + NADP(+) = dihydroxyacetone phosphate + NADPH + H(+). Its pathway is membrane lipid metabolism; glycerophospholipid metabolism. Its function is as follows. Catalyzes the reduction of the glycolytic intermediate dihydroxyacetone phosphate (DHAP) to sn-glycerol 3-phosphate (G3P), the key precursor for phospholipid synthesis. The polypeptide is Glycerol-3-phosphate dehydrogenase [NAD(P)+] (Streptococcus agalactiae serotype III (strain NEM316)).